A 509-amino-acid chain; its full sequence is Phosphoprotein (509 aa).

3 disordered regions span residues 33 to 84 (LESW…LGFR), 131 to 236 (VQAN…DGNS), and 256 to 281 (PESR…SAKT). Polar residues predominate over residues 44–65 (GRATPNPDTSEGDHQNINQSCS). Positions 146 to 157 (DGSDDSDVDSGP) are enriched in acidic residues. S151 carries the post-translational modification Phosphoserine. The segment covering 178-187 (RSTDVEKLEG) has biased composition (basic and acidic residues). Polar residues predominate over residues 221–236 (SRPSAQSIKKGTDGNS). Residues 303–376 (SEFEYEDDLF…LSSIMIAIPG (74 aa)) form a multimerization region. The interaction with the nucleocapsid (N-RNA) stretch occupies residues 459–509 (SSRSVIRSIIKSSKLNIDHKDYLLDLLNDVKGSKDLKEFHKMLTAILAKQP).

This sequence belongs to the morbillivirus P protein family. In terms of assembly, homotetramer. Interacts (via multimerization domain) with polymerase L; this interaction forms the polymerase L-P complex. Interacts (via N-terminus) with N0 (via Ncore); this interaction allows P to chaperon N0 to avoid N polymerization before encapsidation. Interacts (via C-terminus) with N-RNA template; this interaction positions the polymerase on the template for both transcription and replication. Interacts with host ISG15; this interaction disrupts the activity of the N0-P complex. In terms of processing, phosphorylation on serines by host CK2 is necessary for the formation of viral factories.

Essential cofactor of the RNA polymerase L that plays a central role in the transcription and replication by forming the polymerase complex with RNA polymerase L and recruiting L to the genomic N-RNA template for RNA synthesis. Also plays a central role in the encapsidation of nascent RNA chains by forming the encapsidation complex with the nucleocapsid protein N (N-P complex). Acts as a chaperone for newly synthesized free N protein, so-called N0, allowing encapsidation of nascent RNA chains during replication. The nucleoprotein protein N prevents excessive phosphorylation of P, which leads to down-regulation of viral transcription/ replication. Participates, together with N, in the formation of viral factories (viroplasms), which are large inclusions in the host cytoplasm where replication takes place. This chain is Phosphoprotein (P/V), found in Capra hircus (Goat).